A 689-amino-acid polypeptide reads, in one-letter code: Elongation factor G (689 aa).

Residues 8–282 (KKTRNIGIMA…AVIDYLPSPV (275 aa)) enclose the tr-type G domain. GTP is bound by residues 17–24 (AHIDAGKT), 81–85 (DTPGH), and 135–138 (NKMD).

It belongs to the TRAFAC class translation factor GTPase superfamily. Classic translation factor GTPase family. EF-G/EF-2 subfamily.

The protein resides in the cytoplasm. Functionally, catalyzes the GTP-dependent ribosomal translocation step during translation elongation. During this step, the ribosome changes from the pre-translocational (PRE) to the post-translocational (POST) state as the newly formed A-site-bound peptidyl-tRNA and P-site-bound deacylated tRNA move to the P and E sites, respectively. Catalyzes the coordinated movement of the two tRNA molecules, the mRNA and conformational changes in the ribosome. The polypeptide is Elongation factor G (Halothermothrix orenii (strain H 168 / OCM 544 / DSM 9562)).